An 88-amino-acid chain; its full sequence is Anti-CBASS protein 2 (88 aa).

3',3'-cGAMP contacts are provided by Tyr8, Lys9, His11, Lys23, Arg79, and Phe82.

The protein belongs to the Acb2 family. In terms of assembly, homohexamer when bound to 3',3'-cGAMP.

Functionally, antagonizes CBASS (cyclic oligonucleotide-based antiphage signaling system). Binds and sequesters host-produced 3',3'-cyclic GMP-AMP (cGAMP) with a dissociation constant of about 30 nM; each homohexamer binds 3 cGAMP molecules with 1 cGAMP molecule binding to 2 monomers. Sequestration of cGAMP inhibits the cGAMP-activated phospholipase activity of host CBASS effector protein CapV. The polypeptide is Anti-CBASS protein 2 (Enterobacteria phage T4 (Bacteriophage T4)).